A 332-amino-acid chain; its full sequence is MSTKEKLIDHVMKEEPIGSRNKVTVVGVGMVGMASAVSILLKDLCDELALVDVMEDKLKGEVMDLQHGGLFLKTHKIVGDKDYSVTANSRVVVVTAGARQQEGESRLNLVQRNVNIFKFIIPNIVKYSPNCILMVVSNPVDILTYVAWKLSGFPRHRVIGSGTNLDSARFRHIMGEKLHLHPSSCHGWIVGEHGDSSVPVWSGVNVAGVSLQTLNPKMGAEGDTENWKAVHKMVVDGAYEVIKLKGYTSWAIGMSVADLVESIVKNLHKVHPVSTLVKGMHGVKDEVFLSVPCVLGNSGLTDVIHMTLKPEEEKQLVKSAETLWGVQKELTL.

NAD(+) contacts are provided by residues 29–57 (GMVG…MEDK) and Arg99. Substrate-binding residues include Arg106, Asn138, and Arg169. An NAD(+)-binding site is contributed by Asn138. His193 (proton acceptor) is an active-site residue. Thr248 serves as a coordination point for substrate.

Belongs to the LDH/MDH superfamily. LDH family. As to quaternary structure, homotetramer.

The protein localises to the cytoplasm. It catalyses the reaction (S)-lactate + NAD(+) = pyruvate + NADH + H(+). Its pathway is fermentation; pyruvate fermentation to lactate; (S)-lactate from pyruvate: step 1/1. Interconverts simultaneously and stereospecifically pyruvate and lactate with concomitant interconversion of NADH and NAD(+). This Sphyraena lucasana (Lucas barracuda) protein is L-lactate dehydrogenase A chain (ldha).